The chain runs to 116 residues: Non-specific lipid-transfer protein 10 (116 aa).

Residues 1-22 (MMRVVLPLCLLLASIFAWGSEA) form the signal peptide. 4 disulfide bridges follow: C26/C73, C36/C50, C51/C98, and C71/C112.

The protein belongs to the plant LTP family.

Plant non-specific lipid-transfer proteins transfer phospholipids as well as galactolipids across membranes. May play a role in wax or cutin deposition in the cell walls of expanding epidermal cells and certain secretory tissues. In Arabidopsis thaliana (Mouse-ear cress), this protein is Non-specific lipid-transfer protein 10 (LTP10).